A 161-amino-acid chain; its full sequence is NADH-quinone oxidoreductase subunit I (161 aa).

4Fe-4S ferredoxin-type domains lie at 52–82 (LRRY…IEAK) and 92–121 (TKYD…EGPN). [4Fe-4S] cluster-binding residues include Cys-62, Cys-65, Cys-68, Cys-72, Cys-101, Cys-104, Cys-107, and Cys-111.

Belongs to the complex I 23 kDa subunit family. In terms of assembly, NDH-1 is composed of 14 different subunits. Subunits NuoA, H, J, K, L, M, N constitute the membrane sector of the complex. The cofactor is [4Fe-4S] cluster.

The protein localises to the cell inner membrane. It catalyses the reaction a quinone + NADH + 5 H(+)(in) = a quinol + NAD(+) + 4 H(+)(out). Functionally, NDH-1 shuttles electrons from NADH, via FMN and iron-sulfur (Fe-S) centers, to quinones in the respiratory chain. The immediate electron acceptor for the enzyme in this species is believed to be ubiquinone. Couples the redox reaction to proton translocation (for every two electrons transferred, four hydrogen ions are translocated across the cytoplasmic membrane), and thus conserves the redox energy in a proton gradient. The polypeptide is NADH-quinone oxidoreductase subunit I (Orientia tsutsugamushi (strain Boryong) (Rickettsia tsutsugamushi)).